Here is a 581-residue protein sequence, read N- to C-terminus: Ras-specific guanine nucleotide-releasing factor RalGPS1 (581 aa).

The interval 1–31 (MYRRNGLPASVSITSRNTQDSSSSESLDGRS) is disordered. The region spanning 49–288 (TPEEFASQIT…YSLSLKIEPG (240 aa)) is the Ras-GEF domain. The interval 320–339 (PDTSVVAHLPTPPPARHRKS) is disordered. Residues 329–332 (PTPP) carry the PXXP motif. One can recognise a PH domain in the interval 455 to 567 (SITIEGPLRR…WHRHLAEACR (113 aa)).

Its subcellular location is the cytoplasm. The protein resides in the cell membrane. In terms of biological role, guanine nucleotide exchange factor. May be involved in cytoskeletal organization. The polypeptide is Ras-specific guanine nucleotide-releasing factor RalGPS1 (ralgps1) (Danio rerio (Zebrafish)).